The following is a 433-amino-acid chain: Adenylosuccinate synthetase (433 aa).

GTP contacts are provided by residues 13–19 and 41–43; these read GDEGKGK and GHT. The active-site Proton acceptor is the Asp14. 2 residues coordinate Mg(2+): Asp14 and Gly41. IMP is bound by residues 14–17, 39–42, Thr130, Arg144, Gln225, Thr240, and Arg304; these read DEGK and NAGH. Catalysis depends on His42, which acts as the Proton donor. 300–306 is a binding site for substrate; sequence STTGRKR. Residues Arg306, 332–334, and 414–416 each bind GTP; these read KLD and STG.

It belongs to the adenylosuccinate synthetase family. Homodimer. Requires Mg(2+) as cofactor.

Its subcellular location is the cytoplasm. It catalyses the reaction IMP + L-aspartate + GTP = N(6)-(1,2-dicarboxyethyl)-AMP + GDP + phosphate + 2 H(+). It functions in the pathway purine metabolism; AMP biosynthesis via de novo pathway; AMP from IMP: step 1/2. Functionally, plays an important role in the de novo pathway of purine nucleotide biosynthesis. Catalyzes the first committed step in the biosynthesis of AMP from IMP. In Buchnera aphidicola subsp. Acyrthosiphon pisum (strain APS) (Acyrthosiphon pisum symbiotic bacterium), this protein is Adenylosuccinate synthetase.